Reading from the N-terminus, the 589-residue chain is Aspartate--tRNA ligase (589 aa).

Glu-172 is a binding site for L-aspartate. The segment at 196–199 (QLFK) is aspartate. Position 218 (Arg-218) interacts with L-aspartate. ATP contacts are provided by residues 218 to 220 (RDE) and Gln-227. His-449 contacts L-aspartate. Glu-483 lines the ATP pocket. Residue Arg-490 coordinates L-aspartate. 535–538 (GLDR) lines the ATP pocket.

It belongs to the class-II aminoacyl-tRNA synthetase family. Type 1 subfamily. Homodimer.

Its subcellular location is the cytoplasm. The enzyme catalyses tRNA(Asp) + L-aspartate + ATP = L-aspartyl-tRNA(Asp) + AMP + diphosphate. Catalyzes the attachment of L-aspartate to tRNA(Asp) in a two-step reaction: L-aspartate is first activated by ATP to form Asp-AMP and then transferred to the acceptor end of tRNA(Asp). The sequence is that of Aspartate--tRNA ligase from Haemophilus ducreyi (strain 35000HP / ATCC 700724).